A 1107-amino-acid polypeptide reads, in one-letter code: Unconventional myosin-Ie (1107 aa).

A Myosin motor domain is found at 19–692 (SGVDDMVLLS…SLFLLEEMRE (674 aa)). Residue 112 to 119 (GESGAGKT) coordinates ATP. The segment at 581–591 (PHYIRCIKPNE) is actin-binding. Positions 695 to 724 (YDGYARVIQKTWRKFVARKKYVQMREDASD) constitute an IQ domain. The 193-residue stretch at 730–922 (KERRRNSINR…NKVLQVSIGP (193 aa)) folds into the TH1 domain. Residues 920–1052 (IGPGLPKNAR…KPQPKPKPQV (133 aa)) form a disordered region. Polar residues-rich tracts occupy residues 933–949 (RNTVSSRGYSGGTNNNY), 977–989 (SGNQRSNQKSLYT), and 998–1012 (RQQSTGSDRLSQTPE). Ser-1001 is subject to Phosphoserine. Positions 1034 to 1051 (RPPPAGGRPKPQPKPKPQ) are enriched in pro residues. An SH3 domain is found at 1050-1107 (PQVPQCKALYAYDAQDTDELSFNANDVIDIIKEDPSGWWTGRLRGKQGLFPNNYVTKI).

The protein belongs to the TRAFAC class myosin-kinesin ATPase superfamily. Myosin family. As to quaternary structure, interacts with CALM and F-actin. Interacts (via SH3 domain) with SYNJ1, DNM1 and DNM2. Interacts with ARL14EP. Interacts with CARMIL1. Detected in brain stem, brain cortex, cerebellum, stomach, colon, heart, lung, liver, spleen and kidney. Detected in utricle, cochlea, outer hair cell bundle cuticular plate and vestibular epithelia (at protein level). Detected in cochlea and vestibular tissues. Detected in kidney, lung, spleen and intestine.

It is found in the cytoplasm. It localises to the cytoskeleton. The protein resides in the cytoplasmic vesicle. The protein localises to the clathrin-coated vesicle. Its subcellular location is the cell junction. In terms of biological role, myosins are actin-based motor molecules with ATPase activity. Unconventional myosins serve in intracellular movements. Their highly divergent tails bind to membranous compartments, which are then moved relative to actin filaments. Binds to membranes containing anionic phospholipids via its tail domain. Involved in clathrin-mediated endocytosis and intracellular movement of clathrin-coated vesicles. Required for normal morphology of the glomerular basement membrane, normal development of foot processes by kidney podocytes and normal kidney function. In dendritic cells, may control the movement of class II-containing cytoplasmic vesicles along the actin cytoskeleton by connecting them with the actin network via ARL14EP and ARL14. The protein is Unconventional myosin-Ie (Myo1e) of Rattus norvegicus (Rat).